The primary structure comprises 536 residues: Arylsulfatase K (536 aa).

An N-terminal signal peptide occupies residues 1-24 (MIQKCIALSLFLFSALPEDNIVRA). Residues Asp-42 and Cys-82 each coordinate Ca(2+). Cys-82 functions as the Nucleophile in the catalytic mechanism. Cys-82 carries the 3-oxoalanine (Cys) modification. Position 130 (Lys-130) interacts with substrate. N-linked (GlcNAc...) asparagine glycosylation is present at Asn-195. His-253 contacts substrate. Asn-264 carries an N-linked (GlcNAc...) asparagine glycan. Ca(2+) is bound by residues Asp-315 and His-316. Residues Asn-377, Asn-416, and Asn-501 are each glycosylated (N-linked (GlcNAc...) asparagine).

This sequence belongs to the sulfatase family. Requires Ca(2+) as cofactor. The conversion to 3-oxoalanine (also known as C-formylglycine, FGly), of a serine or cysteine residue in prokaryotes and of a cysteine residue in eukaryotes, is critical for catalytic activity.

It is found in the secreted. It localises to the lysosome. It catalyses the reaction an aryl sulfate + H2O = a phenol + sulfate + H(+). The enzyme catalyses Hydrolysis of the 2-sulfate groups of the 2-O-sulfo-D-glucuronate residues of chondroitin sulfate, heparin and heparitin sulfate.. In terms of biological role, catalyzes the hydrolysis of pseudosubstrates such as p-nitrocatechol sulfate and p-nitrophenyl sulfate. Catalyzes the hydrolysis of the 2-sulfate groups of the 2-O-sulfo-D-glucuronate residues of chondroitin sulfate, heparin and heparitin sulfate. Acts selectively on 2-sulfoglucuronate and lacks activity against 2-sulfoiduronate. The polypeptide is Arylsulfatase K (arsk) (Xenopus laevis (African clawed frog)).